The sequence spans 582 residues: MAESAESGGPPGAQDSAADSGPAEPKIMKVTVKTPKEKEEFAVPENSSVQQFKEEISKRFKSHIDQLVLIFAGKILKDQDTLSQHGIHDGLTVHLVIKTQNRPQDNSAQQTNTTGNSVTSSPAPDSNPTSGPAANSSFGLGGLGGLAGLSSLGLNTTNFSELQSQMQRQLLSNPEMMVQIMENPFVQSMLSNPDLMRQLIMANPQMQQLIQRNPEISHMLNNPNIMRQTLELARNPAMMQEMMRNQERDLSNLESIPGGYNALRRMYTDIQEPMLNAAQEQFGGNPFASLVSSPSSAEGTQPSRTENRDPLPNPWAPQTPQSSPASGSTGSTTNTVSTSAGNATSTPAGQGTSGPNLVPGAGASMFNTPGMQSLLQQITENPQLMQNMLSAPYMRSMMQSLSQNPDLAAQMMLNNPLFAGNPQLQEQMRQQLPTFLQQMQNPDTLSAMSNPRAMQALLQIQQGLQTLATEAPGLIPGFTPGLAAGNSGGPAGTTAPSTAPGEDTNPQGGAAEPGHQQFIQQMLQALAGVNPQLQSPEVRFQQQLEQLSAMGFLNREANLQALIATGGDINAAIERLLGSQPS.

Disordered regions lie at residues 1-26 (MAES…AEPK) and 102-136 (RPQD…AANS). At A2 the chain carries N-acetylalanine. Positions 28–102 (MKVTVKTPKE…VHLVIKTQNR (75 aa)) constitute a Ubiquitin-like domain. Positions 102–135 (RPQDNSAQQTNTTGNSVTSSPAPDSNPTSGPAAN) are enriched in polar residues. An interaction with UBXN4 region spans residues 169-422 (QLLSNPEMMV…LNNPLFAGNP (254 aa)). STI1 domains lie at 173 to 201 (NPEM…QLIM) and 203 to 242 (NPQM…MQEM). Residues 285–365 (NPFASLVSSP…NLVPGAGASM (81 aa)) form a disordered region. A compositionally biased stretch (polar residues) spans 290 to 304 (LVSSPSSAEGTQPSR). The span at 318 to 346 (QTPQSSPASGSTGSTTNTVSTSAGNATST) shows a compositional bias: low complexity. STI1 domains are found at residues 381 to 428 (NPQL…QEQM) and 432 to 464 (LPTF…QQGL). The disordered stretch occupies residues 481 to 513 (GLAAGNSGGPAGTTAPSTAPGEDTNPQGGAAEP). Residues 539–579 (RFQQQLEQLSAMGFLNREANLQALIATGGDINAAIERLLGS) form the UBA domain.

Monomer and homodimer. Heterodimer with UBQLN2. Binds CD47. Binds NBL1. Binds GABRA1, GABRA2, GABRA3, GABRA6, GABRB1, GABRB2 and GABRB3. Binds UBE3A, BTRC, P4HB and MTOR. Interacts with the proteasome 19S subunit. Interacts (via ubiquitin-like domain) with TREX1; the interaction is direct and may control TREX1 subcellular location. Forms a complex with UBXN4 and VCP. Interacts (via UBA domain) with UBQLN4 (via ubiquitin-like domain). Found in a complex with UBQLN2 and MAP1LC3A/B/C. The monomeric form interacts with PSEN1 and PSEN2. Interacts with ORAI1. Interacts (via UBA domain) with TICAM1. Interacts with EPS15. Interacts (via UBA domain) with UBA52 and (via ubiquitin-like domain) with PSMD3 and PSMD4. Interacts with HERPUD1. Interacts with MAP1LC3A/B/C in the presence of UBQLN4. Interacts (via ubiquitin-like domain) with EPS15 (via UIM domains) and both the ubiquitinated and non-ubiquitinated forms can interact with EPS15. Interacts (via ubiquitin-like domain) with EPS15L1, HGS (via UIM domain) and STAM2 (via UIM domain). Interacts with BCL2L10/BCL-B; in the cytoplasm. In terms of processing, degraded during both macroautophagy and during chaperone-mediated autophagy (CMA). Phosphorylated. Post-translationally, ubiquitinated.

The protein localises to the nucleus. It localises to the cytoplasm. It is found in the endoplasmic reticulum. The protein resides in the cytoplasmic vesicle. Its subcellular location is the autophagosome. The protein localises to the cell membrane. Plays an important role in the regulation of different protein degradation mechanisms and pathways including ubiquitin-proteasome system (UPS), autophagy and endoplasmic reticulum-associated protein degradation (ERAD) pathway. Mediates the proteasomal targeting of misfolded or accumulated proteins for degradation by binding (via UBA domain) to their polyubiquitin chains and by interacting (via ubiquitin-like domain) with the subunits of the proteasome. Plays a role in the ERAD pathway via its interaction with ER-localized proteins UBXN4, VCP and HERPUD1 and may form a link between the polyubiquitinated ERAD substrates and the proteasome. Plays a role in unfolded protein response (UPR) by attenuating the induction of UPR-inducible genes, DDTI3/CHOP, HSPA5 and PDIA2 during ER stress. Involved in the regulation of macroautophagy and autophagosome formation; required for maturation of autophagy-related protein LC3 from the cytosolic form LC3-I to the membrane-bound form LC3-II and may assist in the maturation of autophagosomes to autolysosomes by mediating autophagosome-lysosome fusion. Negatively regulates the TICAM1/TRIF-dependent toll-like receptor signaling pathway by decreasing the abundance of TICAM1 via the autophagic pathway. Promotes the ubiquitination and lysosomal degradation of ORAI1, consequently down-regulating the ORAI1-mediated Ca2+ mobilization. Suppresses the maturation and proteasomal degradation of amyloid beta A4 protein (A4) by stimulating the lysine 63 (K63)-linked polyubiquitination. Delays the maturation of A4 by sequestering it in the Golgi apparatus and preventing its transport to the cell surface for subsequent processing. Promotes the surface expression of GABA-A receptors. Ubiquitinates BCL2L10 and thereby stabilizes protein abundance. The protein is Ubiquilin-1 (Ubqln1) of Rattus norvegicus (Rat).